The primary structure comprises 119 residues: UPF0231 protein ECA3777 (119 aa).

It belongs to the UPF0231 family.

This is UPF0231 protein ECA3777 from Pectobacterium atrosepticum (strain SCRI 1043 / ATCC BAA-672) (Erwinia carotovora subsp. atroseptica).